The chain runs to 470 residues: Glutamate--tRNA ligase 1 (470 aa).

The 'HIGH' region signature appears at 15-25; the sequence is PSPTGTMHIGT. The short motif at 241-245 is the 'KMSKS' region element; sequence KLSKR. Position 244 (Lys-244) interacts with ATP.

It belongs to the class-I aminoacyl-tRNA synthetase family. Glutamate--tRNA ligase type 1 subfamily. Monomer.

It localises to the cytoplasm. The catalysed reaction is tRNA(Glu) + L-glutamate + ATP = L-glutamyl-tRNA(Glu) + AMP + diphosphate. In terms of biological role, catalyzes the attachment of glutamate to tRNA(Glu) in a two-step reaction: glutamate is first activated by ATP to form Glu-AMP and then transferred to the acceptor end of tRNA(Glu). The protein is Glutamate--tRNA ligase 1 of Jannaschia sp. (strain CCS1).